Here is a 238-residue protein sequence, read N- to C-terminus: Probable transcriptional regulatory protein ABC1956 (238 aa).

This sequence belongs to the TACO1 family. YeeN subfamily.

The protein resides in the cytoplasm. The sequence is that of Probable transcriptional regulatory protein ABC1956 from Shouchella clausii (strain KSM-K16) (Alkalihalobacillus clausii).